The primary structure comprises 122 residues: ILLCAKHMEAAVTQSPRSKVAVTGGKVTLSCHQTNNHDYMYWYRQDTGHGLRLIHYSYVADSTEKGDIPDGYKASRPSQENFSLILELASLSQTAVYFCASSGTGGALDTQYFGPGTRLLVL.

Positions 1–7 (ILLCAKH) are cleaved as a signal peptide. The v segment stretch occupies residues 8-103 (MEAAVTQSPR…TAVYFCASSG (96 aa)). A disulfide bridge links Cys-31 with Cys-99. The d segment stretch occupies residues 104–108 (TGGAL). A j segment region spans residues 109-122 (DTQYFGPGTRLLVL).

The protein is T-cell receptor beta chain V region C5 of Mus musculus (Mouse).